Reading from the N-terminus, the 527-residue chain is MSLCGTRANAKMMAAYNGGTSAAAAGHHHHHHHHLPHLPPPHLHHHHHPQHHLHPGSAAAVHPVQQHTSSAAAAAAAAAAAAAMLNPGQQQPYFPSPAPGQAPGPAAAAPAQVQAAAAATVKAHHHQHSHHPQQQLDIEPDRPIGYGAFGVVWSVTDPRDGKRVALKKMPNVFQNLVSCKRVFRELKMLCFFKHDNVLSALDILQPPHIDYFEEIYVVTELMQSDLHKIIVSPQPLSSDHVKVFLYQILRGLKYLHSAGILHRDIKPGNLLVNSNCVLKICDFGLARVEELDESRHMTQEVVTQYYRAPEILMGSRHYSNAIDIWSVGCIFAELLGRRILFQAQSPIQQLDLITDLLGTPSLEAMRTACEGAKAHILRGPHKQPSLPVLYTLSSQATHEAVHLLCRMLVFDPSKRISAKDALAHPYLDEGRLRYHTCMCKCCFSTSTGRVYTSDFEPVTNPKFDDTFEKNLSSVRQVKEIIHQFILEQQKGNRVPLCINPQSAAFKSFISSTVAQPSEMPPSPLVWE.

2 sufficient for interaction with DAPK3 regions span residues 1 to 125 (MSLC…KAHH) and 124 to 416 (HHHQ…SKRI). 2 required for interaction with TAB2 regions span residues 1–304 (MSLC…VVTQ) and 434–527 (YHTC…LVWE). 2 disordered regions span residues 22-72 (AAAA…SSAA) and 90-139 (QQPY…LDIE). The segment covering 26–54 (GHHHHHHHHLPHLPPPHLHHHHHPQHHLH) has biased composition (basic residues). Residues 103 to 119 (PGPAAAAPAQVQAAAAA) are compositionally biased toward low complexity. The span at 122-131 (KAHHHQHSHH) shows a compositional bias: basic residues. A Protein kinase domain is found at 138–427 (IEPDRPIGYG…AKDALAHPYL (290 aa)). ATP contacts are provided by residues 144–152 (IGYGAFGVV) and lysine 167. Catalysis depends on aspartate 264, which acts as the Proton acceptor. The residue at position 298 (threonine 298) is a Phosphothreonine; by autocatalysis. The TQE motif lies at 298–300 (TQE). Residues 428–527 (DEGRLRYHTC…EMPPSPLVWE (100 aa)) form a required for homodimerization and kinase activation and localization to the nucleus region. Position 522 is a phosphoserine (serine 522).

It belongs to the protein kinase superfamily. CMGC Ser/Thr protein kinase family. MAP kinase subfamily. As to quaternary structure, homodimer. Homodimerization is required for intermolecular autophosphorylation, kinase activation and nuclear localization. Interacts with RNF138/NARF. Interacts with FOXO1 and FOXO3. Interacts with the upstream activating kinases HIPK2 and MAP3K7/TAK1. Interaction with MAP3K7/TAK1 seems to be indirect, and may be mediated by other proteins such as STAT3, TAB1 and TAB2. Interacts with and phosphorylates a number of transcription factors including FOXO4, LEF1, MYB, MYBL1, MYBL2, NOTCH1 and TCF7L2/TCF4. May interact with components of cullin-RING-based SCF (SKP1-CUL1-F-box protein) E3 ubiquitin-protein ligase complexes. Interacts with MEF2A. Interacts with ATF5; the interaction stabilizes ATF5 at the protein level in a kinase-independent manner. Requires Mg(2+) as cofactor. In terms of processing, phosphorylated on Thr-298. Intermolecular autophosphorylation on Thr-298 activates the enzyme. In terms of tissue distribution, expressed at high levels in the brain, and at lower levels in heart, kidney, lung and liver.

The protein localises to the nucleus. Its subcellular location is the cytoplasm. The catalysed reaction is L-seryl-[protein] + ATP = O-phospho-L-seryl-[protein] + ADP + H(+). It carries out the reaction L-threonyl-[protein] + ATP = O-phospho-L-threonyl-[protein] + ADP + H(+). With respect to regulation, activated by the non-canonical Wnt signaling pathway, in which WNT5A leads to activation of MAP3K7/TAK1 and HIPK2, which subsequently phosphorylates and activates this protein. Activated by dimerization and subsequent intermolecular autophosphorylation on Thr-298. Other cytokines such as IL6 may also activate this regulatory circuit. Serine/threonine-protein kinase that regulates a number of transcription factors with key roles in cell fate determination. Positive effector of the non-canonical Wnt signaling pathway, acting downstream of WNT5A, MAP3K7/TAK1 and HIPK2. Negative regulator of the canonical Wnt/beta-catenin signaling pathway. Binds to and phosphorylates TCF7L2/TCF4 and LEF1, promoting the dissociation of the TCF7L2/LEF1/beta-catenin complex from DNA, as well as the ubiquitination and subsequent proteolysis of LEF1. Together these effects inhibit the transcriptional activation of canonical Wnt/beta-catenin target genes. Negative regulator of the Notch signaling pathway. Binds to and phosphorylates NOTCH1, thereby preventing the formation of a transcriptionally active ternary complex of NOTCH1, RBPJ/RBPSUH and MAML1. Negative regulator of the MYB family of transcription factors. Phosphorylation of MYB leads to its subsequent proteolysis while phosphorylation of MYBL1 and MYBL2 inhibits their interaction with the coactivator CREBBP. Other transcription factors may also be inhibited by direct phosphorylation of CREBBP itself. Acts downstream of IL6 and MAP3K7/TAK1 to phosphorylate STAT3, which is in turn required for activation of NLK by MAP3K7/TAK1. Upon IL1B stimulus, cooperates with ATF5 to activate the transactivation activity of C/EBP subfamily members. Phosphorylates ATF5 but also stabilizes ATF5 protein levels in a kinase-independent manner. Acts as an inhibitor of the mTORC1 complex in response to osmotic stress by mediating phosphorylation of RPTOR, thereby preventing recruitment of the mTORC1 complex to lysosomes. The sequence is that of Serine/threonine-protein kinase NLK from Mus musculus (Mouse).